The primary structure comprises 124 residues: Large ribosomal subunit protein bL20 (124 aa).

Belongs to the bacterial ribosomal protein bL20 family.

Functionally, binds directly to 23S ribosomal RNA and is necessary for the in vitro assembly process of the 50S ribosomal subunit. It is not involved in the protein synthesizing functions of that subunit. This is Large ribosomal subunit protein bL20 from Gemmatimonas aurantiaca (strain DSM 14586 / JCM 11422 / NBRC 100505 / T-27).